The sequence spans 339 residues: Ketol-acid reductoisomerase (NADP(+)) (339 aa).

The KARI N-terminal Rossmann domain occupies M1–T182. Residues Y24–Q27, R48, S51, S53, and D83–Q86 contribute to the NADP(+) site. The active site involves H108. G134 serves as a coordination point for NADP(+). The KARI C-terminal knotted domain maps to T183–I328. Residues D191, E195, E227, and E231 each coordinate Mg(2+). Position 252 (S252) interacts with substrate.

The protein belongs to the ketol-acid reductoisomerase family. Mg(2+) is required as a cofactor.

The catalysed reaction is (2R)-2,3-dihydroxy-3-methylbutanoate + NADP(+) = (2S)-2-acetolactate + NADPH + H(+). It carries out the reaction (2R,3R)-2,3-dihydroxy-3-methylpentanoate + NADP(+) = (S)-2-ethyl-2-hydroxy-3-oxobutanoate + NADPH + H(+). The protein operates within amino-acid biosynthesis; L-isoleucine biosynthesis; L-isoleucine from 2-oxobutanoate: step 2/4. It participates in amino-acid biosynthesis; L-valine biosynthesis; L-valine from pyruvate: step 2/4. Involved in the biosynthesis of branched-chain amino acids (BCAA). Catalyzes an alkyl-migration followed by a ketol-acid reduction of (S)-2-acetolactate (S2AL) to yield (R)-2,3-dihydroxy-isovalerate. In the isomerase reaction, S2AL is rearranged via a Mg-dependent methyl migration to produce 3-hydroxy-3-methyl-2-ketobutyrate (HMKB). In the reductase reaction, this 2-ketoacid undergoes a metal-dependent reduction by NADPH to yield (R)-2,3-dihydroxy-isovalerate. The chain is Ketol-acid reductoisomerase (NADP(+)) from Nitrobacter hamburgensis (strain DSM 10229 / NCIMB 13809 / X14).